The chain runs to 338 residues: D-erythrose-4-phosphate dehydrogenase (338 aa).

NAD(+) is bound at residue 11–12 (RI). Substrate is bound by residues 153–155 (SCT), Arg199, 212–213 (TK), and Arg235. Cys154 (nucleophile) is an active-site residue. Asn317 serves as a coordination point for NAD(+).

This sequence belongs to the glyceraldehyde-3-phosphate dehydrogenase family. Epd subfamily. In terms of assembly, homotetramer.

It is found in the cytoplasm. The catalysed reaction is D-erythrose 4-phosphate + NAD(+) + H2O = 4-phospho-D-erythronate + NADH + 2 H(+). It participates in cofactor biosynthesis; pyridoxine 5'-phosphate biosynthesis; pyridoxine 5'-phosphate from D-erythrose 4-phosphate: step 1/5. Catalyzes the NAD-dependent conversion of D-erythrose 4-phosphate to 4-phosphoerythronate. In Shewanella piezotolerans (strain WP3 / JCM 13877), this protein is D-erythrose-4-phosphate dehydrogenase.